Reading from the N-terminus, the 90-residue chain is Probable Fe(2+)-trafficking protein (90 aa).

Belongs to the Fe(2+)-trafficking protein family.

Could be a mediator in iron transactions between iron acquisition and iron-requiring processes, such as synthesis and/or repair of Fe-S clusters in biosynthetic enzymes. This is Probable Fe(2+)-trafficking protein from Herminiimonas arsenicoxydans.